The primary structure comprises 108 residues: MFVGPHRCFLISLIVYTLTVTTSSARLILEDTTVRSEEDSGPSCPVLADEPVGEVMERICDMCHELSSHSRPNMRVECRADCFTTDAFRECLKLFTPRRHTRHLRQKY.

Intrachain disulfides connect Cys-44–Cys-82, Cys-60–Cys-78, and Cys-63–Cys-91.

Belongs to the arthropod CHH/MIH/GIH/VIH hormone family.

This is an uncharacterized protein from Caenorhabditis elegans.